The primary structure comprises 321 residues: Degreening-related gene dee76 protein (321 aa).

Belongs to the Mo25 family.

This chain is Degreening-related gene dee76 protein (DEE76), found in Auxenochlorella protothecoides (Green microalga).